The following is a 497-amino-acid chain: ATP synthase subunit alpha, chloroplastic (497 aa).

170–177 (GDRQTGKT) provides a ligand contact to ATP.

Belongs to the ATPase alpha/beta chains family. As to quaternary structure, F-type ATPases have 2 components, CF(1) - the catalytic core - and CF(0) - the membrane proton channel. CF(1) has five subunits: alpha(3), beta(3), gamma(1), delta(1), epsilon(1). CF(0) has four main subunits: a, b, b' and c.

It localises to the plastid. The protein resides in the chloroplast thylakoid membrane. The enzyme catalyses ATP + H2O + 4 H(+)(in) = ADP + phosphate + 5 H(+)(out). Its function is as follows. Produces ATP from ADP in the presence of a proton gradient across the membrane. The alpha chain is a regulatory subunit. This is ATP synthase subunit alpha, chloroplastic from Bigelowiella natans (Pedinomonas minutissima).